Reading from the N-terminus, the 339-residue chain is UDP-N-acetylenolpyruvoylglucosamine reductase (339 aa).

The 172-residue stretch at 18–189 folds into the FAD-binding PCMH-type domain; the sequence is GIDVRARLLA…LRVRLRLTRR (172 aa). The active site involves R166. S239 acts as the Proton donor in catalysis. Residue E335 is part of the active site.

This sequence belongs to the MurB family. FAD serves as cofactor.

Its subcellular location is the cytoplasm. The catalysed reaction is UDP-N-acetyl-alpha-D-muramate + NADP(+) = UDP-N-acetyl-3-O-(1-carboxyvinyl)-alpha-D-glucosamine + NADPH + H(+). It functions in the pathway cell wall biogenesis; peptidoglycan biosynthesis. Cell wall formation. In Pseudomonas aeruginosa (strain ATCC 15692 / DSM 22644 / CIP 104116 / JCM 14847 / LMG 12228 / 1C / PRS 101 / PAO1), this protein is UDP-N-acetylenolpyruvoylglucosamine reductase.